The primary structure comprises 591 residues: Probable translation initiation factor IF-2 (591 aa).

The region spanning 7-223 (LRTPIVCVMG…LLGLAQRFLE (217 aa)) is the tr-type G domain. Residues 16 to 23 (GHVDHGKT) form a G1 region. Residue 16 to 23 (GHVDHGKT) participates in GTP binding. The segment at 41–45 (AITQH) is G2. The segment at 78–81 (DTPG) is G3. Residues 78 to 82 (DTPGH) and 132 to 135 (NKID) each bind GTP. Residues 132-135 (NKID) form a G4 region. Positions 200 to 202 (SAI) are G5.

Belongs to the TRAFAC class translation factor GTPase superfamily. Classic translation factor GTPase family. IF-2 subfamily.

In terms of biological role, function in general translation initiation by promoting the binding of the formylmethionine-tRNA to ribosomes. Seems to function along with eIF-2. The chain is Probable translation initiation factor IF-2 from Methanococcoides burtonii (strain DSM 6242 / NBRC 107633 / OCM 468 / ACE-M).